Reading from the N-terminus, the 407-residue chain is Tyrosine--tRNA ligase 1 (407 aa).

Y35 is an L-tyrosine binding site. Residues 40-49 (PTGDSLHVGH) carry the 'HIGH' region motif. L-tyrosine is bound by residues Y168 and Q172. The 'KMSKS' region motif lies at 228-232 (KMGKT). Residue K231 participates in ATP binding. Positions 340–406 (SSILDVLVHT…GKKKYYKIVI (67 aa)) constitute an S4 RNA-binding domain.

The protein belongs to the class-I aminoacyl-tRNA synthetase family. TyrS type 1 subfamily. As to quaternary structure, homodimer.

The protein localises to the cytoplasm. It carries out the reaction tRNA(Tyr) + L-tyrosine + ATP = L-tyrosyl-tRNA(Tyr) + AMP + diphosphate + H(+). Catalyzes the attachment of tyrosine to tRNA(Tyr) in a two-step reaction: tyrosine is first activated by ATP to form Tyr-AMP and then transferred to the acceptor end of tRNA(Tyr). In Clostridium acetobutylicum (strain ATCC 824 / DSM 792 / JCM 1419 / IAM 19013 / LMG 5710 / NBRC 13948 / NRRL B-527 / VKM B-1787 / 2291 / W), this protein is Tyrosine--tRNA ligase 1.